The chain runs to 292 residues: Ribosomal RNA small subunit methyltransferase A (292 aa).

The S-adenosyl-L-methionine site is built by asparagine 46, leucine 48, glycine 73, glutamate 94, aspartate 118, and asparagine 136.

The protein belongs to the class I-like SAM-binding methyltransferase superfamily. rRNA adenine N(6)-methyltransferase family. RsmA subfamily.

It is found in the cytoplasm. The enzyme catalyses adenosine(1518)/adenosine(1519) in 16S rRNA + 4 S-adenosyl-L-methionine = N(6)-dimethyladenosine(1518)/N(6)-dimethyladenosine(1519) in 16S rRNA + 4 S-adenosyl-L-homocysteine + 4 H(+). Its function is as follows. Specifically dimethylates two adjacent adenosines (A1518 and A1519) in the loop of a conserved hairpin near the 3'-end of 16S rRNA in the 30S particle. May play a critical role in biogenesis of 30S subunits. The chain is Ribosomal RNA small subunit methyltransferase A from Deinococcus radiodurans (strain ATCC 13939 / DSM 20539 / JCM 16871 / CCUG 27074 / LMG 4051 / NBRC 15346 / NCIMB 9279 / VKM B-1422 / R1).